A 70-amino-acid chain; its full sequence is Large ribosomal subunit protein uL29 (70 aa).

Belongs to the universal ribosomal protein uL29 family.

This is Large ribosomal subunit protein uL29 from Rickettsia bellii (strain OSU 85-389).